We begin with the raw amino-acid sequence, 88 residues long: MGFTEETVRFKLDDSNKKEISETLTDVYASLNDKGYNPINQIVGYVLSGDPAYVPRYNNARNQIRKYERDEIVEELVRYYLKGQGVDL.

The protein belongs to the UPF0297 family.

This Streptococcus pneumoniae (strain CGSP14) protein is UPF0297 protein SPCG_0205.